Consider the following 61-residue polypeptide: Small ribosomal subunit protein uS14 (61 aa).

The Zn(2+) site is built by C24, C27, C40, and C43.

It belongs to the universal ribosomal protein uS14 family. Zinc-binding uS14 subfamily. As to quaternary structure, part of the 30S ribosomal subunit. Contacts proteins S3 and S10. The cofactor is Zn(2+).

Binds 16S rRNA, required for the assembly of 30S particles and may also be responsible for determining the conformation of the 16S rRNA at the A site. This is Small ribosomal subunit protein uS14 from Dictyoglomus turgidum (strain DSM 6724 / Z-1310).